A 41-amino-acid chain; its full sequence is Photosystem I reaction center subunit IX (41 aa).

The helical transmembrane segment at 7-27 (YLSTAPVLATLWFGFLAGLLI) threads the bilayer.

This sequence belongs to the PsaJ family.

It localises to the plastid. Its subcellular location is the chloroplast thylakoid membrane. Functionally, may help in the organization of the PsaE and PsaF subunits. The chain is Photosystem I reaction center subunit IX from Physcomitrium patens (Spreading-leaved earth moss).